The chain runs to 78 residues: Probable cytochrome c oxidase subunit 6B (78 aa).

Positions 21–64 (TKHCWANYVDYYGCVKHYNGDNSKCQTFFNSMNSLCPAAWISEW) constitute a CHCH domain. The short motif at 24-34 (CWANYVDYYGC) is the Cx9C motif element. Cystine bridges form between cysteine 24-cysteine 56 and cysteine 34-cysteine 45. The Cx10C motif signature appears at 45-56 (CQTFFNSMNSLC).

It belongs to the cytochrome c oxidase subunit 6B family. In terms of assembly, component of the cytochrome c oxidase (complex IV, CIV), a multisubunit enzyme composed of a catalytic core of 3 subunits and several supernumerary subunits. The complex exists as a monomer or a dimer and forms supercomplexes (SCs) in the inner mitochondrial membrane with ubiquinol-cytochrome c oxidoreductase (cytochrome b-c1 complex, complex III, CIII).

The protein localises to the mitochondrion inner membrane. Its pathway is energy metabolism; oxidative phosphorylation. In terms of biological role, component of the cytochrome c oxidase, the last enzyme in the mitochondrial electron transport chain which drives oxidative phosphorylation. The respiratory chain contains 3 multisubunit complexes succinate dehydrogenase (complex II, CII), ubiquinol-cytochrome c oxidoreductase (cytochrome b-c1 complex, complex III, CIII) and cytochrome c oxidase (complex IV, CIV), that cooperate to transfer electrons derived from NADH and succinate to molecular oxygen, creating an electrochemical gradient over the inner membrane that drives transmembrane transport and the ATP synthase. Cytochrome c oxidase is the component of the respiratory chain that catalyzes the reduction of oxygen to water. Electrons originating from reduced cytochrome c in the intermembrane space (IMS) are transferred via the dinuclear copper A center (CU(A)) of subunit 2 and heme A of subunit 1 to the active site in subunit 1, a binuclear center (BNC) formed by heme A3 and copper B (CU(B)). The BNC reduces molecular oxygen to 2 water molecules using 4 electrons from cytochrome c in the IMS and 4 protons from the mitochondrial matrix. In Dictyostelium discoideum (Social amoeba), this protein is Probable cytochrome c oxidase subunit 6B.